We begin with the raw amino-acid sequence, 395 residues long: Tryptophan synthase beta chain (395 aa).

Lys-89 is subject to N6-(pyridoxal phosphate)lysine.

This sequence belongs to the TrpB family. As to quaternary structure, tetramer of two alpha and two beta chains. Pyridoxal 5'-phosphate is required as a cofactor.

The catalysed reaction is (1S,2R)-1-C-(indol-3-yl)glycerol 3-phosphate + L-serine = D-glyceraldehyde 3-phosphate + L-tryptophan + H2O. It functions in the pathway amino-acid biosynthesis; L-tryptophan biosynthesis; L-tryptophan from chorismate: step 5/5. The beta subunit is responsible for the synthesis of L-tryptophan from indole and L-serine. The protein is Tryptophan synthase beta chain of Fusobacterium nucleatum subsp. nucleatum (strain ATCC 25586 / DSM 15643 / BCRC 10681 / CIP 101130 / JCM 8532 / KCTC 2640 / LMG 13131 / VPI 4355).